Consider the following 242-residue polypeptide: uncharacterized protein (242 aa).

S-adenosyl-L-methionine is bound by residues Gly-198, Ile-218, and Leu-227.

This sequence belongs to the class IV-like SAM-binding methyltransferase superfamily. RNA methyltransferase TrmH family.

This is an uncharacterized protein from Mycoplasma genitalium (strain ATCC 33530 / DSM 19775 / NCTC 10195 / G37) (Mycoplasmoides genitalium).